A 192-amino-acid chain; its full sequence is A-type ATP synthase subunit E (192 aa).

The segment at 1–66 is disordered; it reads MSLDTVVEDI…QERDQKLSSA (66 aa). Basic and acidic residues predominate over residues 8–26; it reads EDIRDEARARADEIRSEGE. Over residues 27–49 the composition is skewed to acidic residues; that stretch reads ERAEEIIDEAEREADDIVDEAER. A compositionally biased stretch (basic and acidic residues) spans 50–66; sequence EAERKISQERDQKLSSA.

Belongs to the V-ATPase E subunit family. As to quaternary structure, has multiple subunits with at least A(3), B(3), C, D, E, F, H, I and proteolipid K(x).

It is found in the cell membrane. Component of the A-type ATP synthase that produces ATP from ADP in the presence of a proton gradient across the membrane. The protein is A-type ATP synthase subunit E of Natronomonas pharaonis (strain ATCC 35678 / DSM 2160 / CIP 103997 / JCM 8858 / NBRC 14720 / NCIMB 2260 / Gabara) (Halobacterium pharaonis).